The primary structure comprises 145 residues: 3-dehydroquinate dehydratase (145 aa).

Tyr23 serves as the catalytic Proton acceptor. 3 residues coordinate substrate: Asn75, His81, and Asp88. His101 serves as the catalytic Proton donor. Substrate-binding positions include 102–103 and Arg112; that span reads LS.

This sequence belongs to the type-II 3-dehydroquinase family. As to quaternary structure, homododecamer.

It carries out the reaction 3-dehydroquinate = 3-dehydroshikimate + H2O. It participates in metabolic intermediate biosynthesis; chorismate biosynthesis; chorismate from D-erythrose 4-phosphate and phosphoenolpyruvate: step 3/7. Its function is as follows. Catalyzes a trans-dehydration via an enolate intermediate. The chain is 3-dehydroquinate dehydratase from Legionella pneumophila (strain Lens).